Consider the following 390-residue polypeptide: Homeobox protein Meis1 (390 aa).

Residues 108–192 (GGDVCSSESF…IDLVIDDREG (85 aa)) form the MEIS N-terminal domain. The span at 190–202 (REGGSKSDSEDVT) shows a compositional bias: basic and acidic residues. The disordered stretch occupies residues 190-279 (REGGSKSDSE…KKRHKKRGIF (90 aa)). Over residues 203–213 (RSANLTDQPSW) the composition is skewed to polar residues. The segment at residues 272 to 334 (RHKKRGIFPK…NARRRIVQPM (63 aa)) is a DNA-binding region (homeobox; TALE-type). The interval 299 to 329 (YPSEEQKKQLAQDTGLTILQVNNWFINARRR) is interaction with DNA. A required for transcriptional activation region spans residues 335 to 390 (IDQSNRAVSQGTPYNPDGQPMGGFVMDGQQHMGIRAPGPMSGMGMNMGMEGQWHYM).

It belongs to the TALE/MEIS homeobox family. Interacts with the N-terminal region of PBX1 to form a heterodimer which binds DNA including a cAMP-responsive sequence in CYP17. Also forms heterodimers with PBX2. Forms heterotrimers with PBX1 or PBX2 and a number of HOX proteins including HOXA9, HOXD4 and HOXD9 where it acts as a non-DNA-binding partner. Also forms heterotrimers with PBX1 and HOX proteins including HOXD9 and HOXD10 where PBX1 is the non-DNA-binding partner. Heterodimer with DLX3. Heterodimer with HOXB13. As to expression, expressed at high levels in the lung with lower levels detected in the heart and brain. Expressed in pancreatic islets (beta-cells and non-beta-cells).

Its subcellular location is the nucleus. Functionally, acts as a transcriptional regulator of PAX6. Also acts as a transcriptional activator of PF4 in complex with PBX1 or PBX2. Required for hematopoiesis, megakaryocyte lineage development and vascular patterning. May function as a cofactor for HOXA7 and HOXA9 in the induction of myeloid leukemias. The polypeptide is Homeobox protein Meis1 (Meis1) (Mus musculus (Mouse)).